The primary structure comprises 314 residues: DNA-directed RNA polymerase subunit alpha (314 aa).

The interval 1–227 (MTTFEIECIE…ELLFPLKEIN (227 aa)) is alpha N-terminal domain (alpha-NTD). The alpha C-terminal domain (alpha-CTD) stretch occupies residues 237–314 (IEDSKINQIL…LPKEKTSKSN (78 aa)).

Belongs to the RNA polymerase alpha chain family. In terms of assembly, in plastids the minimal PEP RNA polymerase catalytic core is composed of four subunits: alpha, beta, beta', and beta''. When a (nuclear-encoded) sigma factor is associated with the core the holoenzyme is formed, which can initiate transcription.

The protein localises to the plastid. It localises to the chloroplast. The catalysed reaction is RNA(n) + a ribonucleoside 5'-triphosphate = RNA(n+1) + diphosphate. Its function is as follows. DNA-dependent RNA polymerase catalyzes the transcription of DNA into RNA using the four ribonucleoside triphosphates as substrates. The protein is DNA-directed RNA polymerase subunit alpha of Pyrenomonas salina.